Consider the following 876-residue polypeptide: DNA polymerase I (876 aa).

Residues 1 to 310 enclose the 5'-3' exonuclease domain; the sequence is MKNKLVLIDG…FAIADSVTDE (310 aa). Residues 289-876 are subtilisin large fragment; the sequence is TDEGEKPLAG…HYGPTWYDAK (588 aa). The polymerase stretch occupies residues 469–876; sequence EQDRLLTELE…HYGPTWYDAK (408 aa).

Belongs to the DNA polymerase type-A family. In terms of assembly, single-chain monomer with multiple functions.

The enzyme catalyses DNA(n) + a 2'-deoxyribonucleoside 5'-triphosphate = DNA(n+1) + diphosphate. Its function is as follows. In addition to polymerase activity, the recombinant enzyme has strand displacement and 5'-3' exonuclease activity, but lacks proofreading 3'-5' exonuclease activity. The sequence is that of DNA polymerase I (polA) from Geobacillus stearothermophilus (Bacillus stearothermophilus).